Here is a 192-residue protein sequence, read N- to C-terminus: GTP cyclohydrolase-2 (192 aa).

Residue 50–54 (RLHSE) coordinates GTP. 3 residues coordinate Zn(2+): cysteine 55, cysteine 66, and cysteine 68. GTP is bound by residues 92–94 (EGR) and threonine 114. The Proton acceptor role is filled by aspartate 126. The Nucleophile role is filled by arginine 128. Positions 149 and 154 each coordinate GTP.

Belongs to the GTP cyclohydrolase II family. Zn(2+) is required as a cofactor.

The enzyme catalyses GTP + 4 H2O = 2,5-diamino-6-hydroxy-4-(5-phosphoribosylamino)-pyrimidine + formate + 2 phosphate + 3 H(+). Its pathway is cofactor biosynthesis; riboflavin biosynthesis; 5-amino-6-(D-ribitylamino)uracil from GTP: step 1/4. Its function is as follows. Catalyzes the conversion of GTP to 2,5-diamino-6-ribosylamino-4(3H)-pyrimidinone 5'-phosphate (DARP), formate and pyrophosphate. This chain is GTP cyclohydrolase-2, found in Helicobacter pylori (strain J99 / ATCC 700824) (Campylobacter pylori J99).